Consider the following 230-residue polypeptide: Intracellular hyphae protein 1 (230 aa).

Positions 1–18 (MQTSFVALLAVAASLASA) are cleaved as a signal peptide. The disordered stretch occupies residues 20–102 (PHGGNSYEAS…KNNTLPVPTC (83 aa)). 10 repeat units span residues 30-33 (LPEP), 36-39 (LPEP), 42-45 (LPEP), 46-49 (VEGP), 50-53 (YKPK), 57-60 (LPEP), 65-68 (YKPK), 76-79 (VEGP), 80-83 (YKPK), and 84-87 (LPEP). Residues 30–87 (LPEPTNLPEPTKLPEPVEGPYKPKPPILPEPIKDNYKPKTPILPEHVEGPYKPKLPEP) form a 5 X 4 AA repeats of L-P-E-P region. Positions 46-87 (VEGPYKPKPPILPEPIKDNYKPKTPILPEHVEGPYKPKLPEP) are 2 X 4 AA repeats of V-E-G-P. Residues 50–83 (YKPKPPILPEPIKDNYKPKTPILPEHVEGPYKPK) are 3 X 4 AA repeats of Y-K-P-K. The segment covering 74–84 (EHVEGPYKPKL) has biased composition (basic and acidic residues). N-linked (GlcNAc...) asparagine glycosylation occurs at Asn94. The 45-residue stretch at 108–152 (KTHKVKSGESLTTIAEKYDTGICNIAKLNNLADPNFVDLNQDLQI) folds into the LysM 1 domain. An N-linked (GlcNAc...) asparagine glycan is attached at Asn161. The 45-residue stretch at 183-227 (DIYSVVSGDTLTSIAQALQITLQSLKDANPGVVPEHLNVGQKLNV) folds into the LysM 2 domain.

Forms a multimeric structure. In terms of processing, N-glycosylated and may be O-glycosylated. As to expression, expressed in penetration hyphae, infection vesicles and primary hyphae (intracellular hyphae).

The protein localises to the secreted. It localises to the cell wall. Functionally, may have roles in host-pathogen interaction, including establishment and maintenance of biotrophy, prevention of host recognition of the fungus and a barrier to host defense molecules. This chain is Intracellular hyphae protein 1 (CIH1), found in Colletotrichum lindemuthianum (Bean anthracnose fungus).